A 444-amino-acid chain; its full sequence is UDP-N-acetylglucosamine 1-carboxyvinyltransferase (444 aa).

Lys22–Asn23 lines the phosphoenolpyruvate pocket. Position 94 (Arg94) interacts with UDP-N-acetyl-alpha-D-glucosamine. The Proton donor role is filled by Asp119. UDP-N-acetyl-alpha-D-glucosamine is bound by residues Asp309 and Val331.

Belongs to the EPSP synthase family. MurA subfamily.

The protein localises to the cytoplasm. The catalysed reaction is phosphoenolpyruvate + UDP-N-acetyl-alpha-D-glucosamine = UDP-N-acetyl-3-O-(1-carboxyvinyl)-alpha-D-glucosamine + phosphate. Its pathway is cell wall biogenesis; peptidoglycan biosynthesis. In terms of biological role, cell wall formation. Adds enolpyruvyl to UDP-N-acetylglucosamine. The sequence is that of UDP-N-acetylglucosamine 1-carboxyvinyltransferase from Chlamydia abortus (strain DSM 27085 / S26/3) (Chlamydophila abortus).